The sequence spans 411 residues: Serine--tRNA ligase (411 aa).

226–228 (TSE) contacts L-serine. Residue 257–259 (RKE) participates in ATP binding. Glutamate 280 contacts L-serine. 344 to 347 (EISS) contacts ATP. Serine 379 contacts L-serine.

This sequence belongs to the class-II aminoacyl-tRNA synthetase family. Type-1 seryl-tRNA synthetase subfamily. Homodimer. The tRNA molecule binds across the dimer.

The protein resides in the cytoplasm. The catalysed reaction is tRNA(Ser) + L-serine + ATP = L-seryl-tRNA(Ser) + AMP + diphosphate + H(+). It catalyses the reaction tRNA(Sec) + L-serine + ATP = L-seryl-tRNA(Sec) + AMP + diphosphate + H(+). It participates in aminoacyl-tRNA biosynthesis; selenocysteinyl-tRNA(Sec) biosynthesis; L-seryl-tRNA(Sec) from L-serine and tRNA(Sec): step 1/1. Catalyzes the attachment of serine to tRNA(Ser). Is also able to aminoacylate tRNA(Sec) with serine, to form the misacylated tRNA L-seryl-tRNA(Sec), which will be further converted into selenocysteinyl-tRNA(Sec). The polypeptide is Serine--tRNA ligase (Campylobacter jejuni subsp. jejuni serotype O:2 (strain ATCC 700819 / NCTC 11168)).